A 177-amino-acid chain; its full sequence is ATP synthase subunit delta (177 aa).

The protein belongs to the ATPase delta chain family. In terms of assembly, F-type ATPases have 2 components, F(1) - the catalytic core - and F(0) - the membrane proton channel. F(1) has five subunits: alpha(3), beta(3), gamma(1), delta(1), epsilon(1). F(0) has three main subunits: a(1), b(2) and c(10-14). The alpha and beta chains form an alternating ring which encloses part of the gamma chain. F(1) is attached to F(0) by a central stalk formed by the gamma and epsilon chains, while a peripheral stalk is formed by the delta and b chains.

Its subcellular location is the cell inner membrane. F(1)F(0) ATP synthase produces ATP from ADP in the presence of a proton or sodium gradient. F-type ATPases consist of two structural domains, F(1) containing the extramembraneous catalytic core and F(0) containing the membrane proton channel, linked together by a central stalk and a peripheral stalk. During catalysis, ATP synthesis in the catalytic domain of F(1) is coupled via a rotary mechanism of the central stalk subunits to proton translocation. Functionally, this protein is part of the stalk that links CF(0) to CF(1). It either transmits conformational changes from CF(0) to CF(1) or is implicated in proton conduction. The protein is ATP synthase subunit delta of Neisseria meningitidis serogroup C (strain 053442).